A 423-amino-acid chain; its full sequence is Glutamyl-tRNA reductase (423 aa).

Substrate is bound by residues 49–52, S106, 111–113, and Q117; these read TCNR and EPQ. The active-site Nucleophile is C50. 186-191 is an NADP(+) binding site; that stretch reads GAGDTS.

The protein belongs to the glutamyl-tRNA reductase family. Homodimer.

It carries out the reaction (S)-4-amino-5-oxopentanoate + tRNA(Glu) + NADP(+) = L-glutamyl-tRNA(Glu) + NADPH + H(+). The protein operates within porphyrin-containing compound metabolism; protoporphyrin-IX biosynthesis; 5-aminolevulinate from L-glutamyl-tRNA(Glu): step 1/2. In terms of biological role, catalyzes the NADPH-dependent reduction of glutamyl-tRNA(Glu) to glutamate 1-semialdehyde (GSA). The protein is Glutamyl-tRNA reductase of Idiomarina loihiensis (strain ATCC BAA-735 / DSM 15497 / L2-TR).